Reading from the N-terminus, the 459-residue chain is ATP-dependent RNA helicase me31b (459 aa).

A recA-like domain 1 region spans residues 1 to 267 (MMTEKLNSGH…EINLMEELTL (267 aa)). Phosphoserine is present on residues Ser-8 and Ser-29. Positions 58-86 (NEFEEFCLKRELLMGIFEKGWERPSPIQE) match the Q motif motif. The Helicase ATP-binding domain maps to 89-259 (IPIALSGKDV…EKHLREPYEI (171 aa)). Residue 102-109 (AKNGTGKT) coordinates ATP. Residues 207 to 210 (DEAD) carry the DEAD box motif. The segment at 264 to 431 (ELTLKGVTQY…PKVIDPALYV (168 aa)) is gyf binding. Residues 269-429 (GVTQYYAFVQ…PIPKVIDPAL (161 aa)) form the Helicase C-terminal domain. The segment at 432 to 459 (ANVGASVGDTCNNSDLNNSANEEGNVSK) is recA-like domain 2. At Ser-450 the chain carries Phosphoserine.

This sequence belongs to the DEAD box helicase family. DDX6/DHH1 subfamily. Conserved component of different types of multiprotein ribonucleoprotein complexes (RNPs) that form distinct germ granules (P-body, nuage, sponge body or polar granules) and P-body-like neuronal RNPs. Consequently it interacts with a wide variety of proteins, some of which appear to be common interactive partners in almost all RNPs types i.e. cup and tral, whereas other interactions are specific to a germ granule/RNP. Core functional components in me31B-containing RNPs include RNA regulatory proteins (such as translational repressor, RNA-decapping and exonuclease proteins), RNA localization proteins and additional proteins depending on the biological context of the RNPs. In the P-body RNPs, interacts with at least the translation repressor proteins tral, cup and Edc3, and the mRNA localization factor yps. Interaction with tral or Edc3 is required for translation repression and possibly RNA decapping; binding to tral and Edc3 is mutually exclusive. In the nuage and germ plasm polar granule RNPs, interacts with at least tral, cup, and additional proteins required for assembly and function of the germ granules such as tud, vas and aub. Interacts (when dimethylated on Arg residues) with tud; interaction is RNA-independent. Component of the osk RNP complex, which is composed of at least me31B, exu, yps, aret/bruno, cup, and the mRNA of osk. Component of the nanos RNP complex, which is composed of at least smg, cup, tral, me31B, the CCR4-NOT complex members Rga/NOT2 and Caf1-55, and the mRNA of nanos (nos). Interacts with tral and piRNA pathway components papi and AGO3; promotes interaction between nuage RNPs and the piRNA-mediated transposon silencing. Forms a RNP containing at least me31B, eIF4E1, cup, tral and pAbp; this interaction is required for the translational silencing of maternal mRNAs during the maternal-to-zygotic transition. In the sponge body, forms a RNP containing at least me31B, exu, yps and the mRNA of osk; interactions with exu and yps are RNA dependent. Component of a neuronal RNP, at least composed of me31B, tral and Fmr1. Component of the Atx2-Not1 repressor complex, composed of at least me31B, Atx2, tyf and pAbp. Interacts (via the C-terminus) with Atx2, tyf, pAbp and Lsm12a. Interacts (via RecA-like domain 2) with 4EHP-GYF2 complex member Gyf (via the me31B binding motif). Interacts with 4E-T, Edc3 and Patr-1. Symmetrically dimethylated on arginine residues. In terms of tissue distribution, ubiquitously expressed throughout the brain (at protein level). Expressed in the olfactory system including the antennal lobes, projection neurons, local interneurons, mushroom-body Kenyon cells and glial cells (at protein level).

Its subcellular location is the cytoplasm. It is found in the cytoplasmic ribonucleoprotein granule. The protein resides in the P-body. It localises to the endoplasmic reticulum. The protein localises to the cell projection. Its subcellular location is the dendrite. It catalyses the reaction ATP + H2O = ADP + phosphate + H(+). Its function is as follows. ATP-dependent RNA helicase which is a core component of a variety of ribonucleoprotein complexes (RNPs) that play critical roles in translational repression and mRNA decapping during embryogenesis, oogenesis, neurogenesis and neurotransmission. Recruits core components and translational repressors to some RNP complexes, and mediates RNP aggregation into processing granules such as P-bodies. As part of a RNP complex containing tral, eIF4E1, cup, and pAbp, involved in RNP-mediated translational repression of maternal mRNAs during oogenesis and embryogenesis. As part of a RNP complex containing tral and the RNA localization factors exu and yps, mediates translational silencing of mRNAs such as osk/oskar and bcd/bicoid during their transport to the oocyte in order to prevent their translation until they reach their positional destinations. In neurons and possibly imaginal disks, involved in miRNA-mediated translational repression, possibly in association with components of the piRNA transposon silencing pathway. Involved in RNA localization and protein trafficking in the oocyte. As part of an ER-associated RNP containing tral, cup and yps, required for tral-dependent ER exit site formation and consequently efficient trafficking of proteins such as grk and yl through the secretory pathway. Component of neuron RNPs that mediate transport and translation of neuronal RNAs, including translation repression of synaptic transcripts in preparation for their dendritic targeting. As part of the Atx2-Not1 repressor complex promotes Not1-dependent post-transcriptional gene silencing in adult circadian pacemaker neurons in order to sustain high-amplitude circadian rhythms and Pdf cycling in a per-independent manner. Promotes the interaction between Atx2 and Not1 within the Atx2-Not1 RNP complex. Recruited to the 4EHP-GYF2 complex by Gyf, where it plays a role in 4EHP-GYF2 mediated translational repression and mRNA decay. The chain is ATP-dependent RNA helicase me31b (me31B) from Drosophila melanogaster (Fruit fly).